Consider the following 418-residue polypeptide: Tyrosine--tRNA ligase (418 aa).

Tyrosine 34 is an L-tyrosine binding site. The 'HIGH' region signature appears at 39–48; that stretch reads PTADSLHLGH. Positions 169 and 173 each coordinate L-tyrosine. Residues 229–233 carry the 'KMSKS' region motif; that stretch reads KFGKS. Lysine 232 serves as a coordination point for ATP. Residues 352–418 enclose the S4 RNA-binding domain; the sequence is HNIVEILVAA…GKKKYAVLTY (67 aa).

Belongs to the class-I aminoacyl-tRNA synthetase family. TyrS type 1 subfamily. As to quaternary structure, homodimer.

The protein resides in the cytoplasm. The catalysed reaction is tRNA(Tyr) + L-tyrosine + ATP = L-tyrosyl-tRNA(Tyr) + AMP + diphosphate + H(+). In terms of biological role, catalyzes the attachment of tyrosine to tRNA(Tyr) in a two-step reaction: tyrosine is first activated by ATP to form Tyr-AMP and then transferred to the acceptor end of tRNA(Tyr). The chain is Tyrosine--tRNA ligase from Streptococcus pyogenes serotype M1.